The following is a 484-amino-acid chain: Zinc metalloproteinase-disintegrin BlatH1 (484 aa).

A signal peptide spans 1–20 (MIQVLLVTICLAALPYQGSS). Residues 21–190 (IILESGNVND…KKASQSNLTP (170 aa)) constitute a propeptide that is removed on maturation. Glu191 is subject to Pyrrolidone carboxylic acid (Glu). One can recognise a Peptidase M12B domain in the interval 199 to 395 (KYVELVIVAD…QNSQCILNEP (197 aa)). Glu202 contacts Ca(2+). Asn259 is a glycosylation site (N-linked (GlcNAc...) asparagine). Asp286 is a binding site for Ca(2+). A glycan (N-linked (GlcNAc...) asparagine) is linked at Asn297. Disulfide bonds link Cys310/Cys390, Cys350/Cys374, and Cys352/Cys357. His335 serves as a coordination point for Zn(2+). The active site involves Glu336. His339 and His345 together coordinate Zn(2+). Asn373 carries N-linked (GlcNAc...) asparagine glycosylation. Ca(2+) is bound by residues Cys390, Asn393, Val405, Asn408, Glu412, Glu415, and Asp418. The region spanning 403–484 (PPVCGNEILE…GQSADCPSNG (82 aa)) is the Disintegrin domain. Disulfide bonds link Cys406/Cys425, Cys417/Cys435, Cys419/Cys430, Cys429/Cys452, Cys443/Cys449, Cys448/Cys473, and Cys461/Cys480. Residues 465 to 467 (TDN) carry the TDN-tripeptide motif.

It belongs to the venom metalloproteinase (M12B) family. P-II subfamily. P-IIc sub-subfamily. In terms of assembly, homodimer. It depends on Zn(2+) as a cofactor. Post-translationally, the N-terminus is blocked. Expressed by the venom gland.

The protein resides in the secreted. Its activity is regulated as follows. Platelet aggregation in inhibited by the metalloproteinase inhibitors EDTA and Batimastat. The hemorrhagic activity is not inhibited by the plasma proteinase inhibitor alpha2-macroglobulin, although the SVMP is able to cleave this plasma inhibitor, generating a 90 kDa product. Its function is as follows. Snake venom zinc metalloprotease-disintegrin that hydrolyzes azocasein, gelatin and fibrinogen (Aalpha and Bbeta chains and partially gamma-chain), and exerts a potent local and systemic hemorrhagic activity in mice. It inhibits ADP- and collagen-induced human platelet aggregation (IC(50) = 0.3 uM and 0.7 uM for ADP and collagen, respectively). This inhibition is dependent of protease activity, and probably occurs through the degradation of an unknown platelet receptor. The chain is Zinc metalloproteinase-disintegrin BlatH1 from Bothriechis lateralis (Side-striped palm pitviper).